The primary structure comprises 102 residues: Carboxysome shell protein CcmK2 (102 aa).

The BMC domain occupies 4-90; that stretch reads AVGMIETRGF…PHENLEYVLP (87 aa).

This sequence belongs to the bacterial microcompartments protein family. CcmK subfamily. In terms of assembly, homohexamer. Stacked hexamers, with the concave faces together, have also been crystallized. Interacts preferentially with itself, then with CcmK1 and CcmK4a in vitro. May interact with CcmL, this occurs at very high CcmK2 concentrations. Interacts with CcmN and CcmO in the carboxysome.

The protein localises to the carboxysome. In terms of biological role, probably the major shell protein of the carboxysome, a polyhedral inclusion where RuBisCO (ribulose bisphosphate carboxylase, rbcL-rbcS) is sequestered. Assembles into hexamers which make sheets that form the facets of the polyhedral carboxysome. The hexamer central pore probably regulates metabolite flux. The protein is Carboxysome shell protein CcmK2 of Thermosynechococcus vestitus (strain NIES-2133 / IAM M-273 / BP-1).